The primary structure comprises 405 residues: Imidazolonepropionase (405 aa).

Fe(3+) is bound by residues His-72 and His-74. Zn(2+)-binding residues include His-72 and His-74. The 4-imidazolone-5-propanoate site is built by Arg-81, Tyr-144, and His-177. Residue Tyr-144 participates in N-formimidoyl-L-glutamate binding. His-242 is a Fe(3+) binding site. Zn(2+) is bound at residue His-242. A 4-imidazolone-5-propanoate-binding site is contributed by Gln-245. Asp-317 is a binding site for Fe(3+). Asp-317 provides a ligand contact to Zn(2+). N-formimidoyl-L-glutamate is bound by residues Asn-319 and Gly-321. Thr-322 is a binding site for 4-imidazolone-5-propanoate.

This sequence belongs to the metallo-dependent hydrolases superfamily. HutI family. Zn(2+) is required as a cofactor. The cofactor is Fe(3+).

The protein localises to the cytoplasm. It carries out the reaction 4-imidazolone-5-propanoate + H2O = N-formimidoyl-L-glutamate. It participates in amino-acid degradation; L-histidine degradation into L-glutamate; N-formimidoyl-L-glutamate from L-histidine: step 3/3. Catalyzes the hydrolytic cleavage of the carbon-nitrogen bond in imidazolone-5-propanoate to yield N-formimidoyl-L-glutamate. It is the third step in the universal histidine degradation pathway. The sequence is that of Imidazolonepropionase from Klebsiella pneumoniae subsp. pneumoniae (strain ATCC 700721 / MGH 78578).